The primary structure comprises 663 residues: MNIEEAKQRIEQLTETINYHNKLYYTDDNPEIEDYEYDKLFRELENLEREFPELKKDDSPTNKVGGTILEKFEKFEHPIAMYSLSNVMNEEEFLEFDNRMQKELNQSKIKYTVENKFDGLALELIYEKGKLTVASTRGDGQVGENVTNNVKMMSNVPKSIKEKKKLIVRGEALITKKDFEALNKEREELEEIPFANARNAASGGLRQLDSAESKKRRLKFFAYQIANYKDFDLTNEYKSMEFLSELGFTVEGVHPNIDAKKVLETYYDIQEKRSKMDYEIDGLVIKVDDVKHQEKLGFLSRAPRFAVAFKFKPEEKETVLKNIEVQVGRTGALTPVAKLEPVQVGGVTVSNVTLHNPNEIKSKDIRIGDTVVVIRSGDVIPKITRVVLEKRTADSKPFEFPKKCPVCGGDTAVTDGDVIVRCINEECPSKITRYIEYFVSKPAMNMERIGKEWIAVFTKSGLVKTPADLYKITRDDLFKFERMGEKLAGYMLESIENSKNTTLKRFIYALGIRQVGETTADLLAKYFTSIENFKKATIDDLQNIEGIGEISAKSIYDFLHNEKTLKLIDDLLASGVNPVFEKVVTVESPLTGKNVVITGSIEGFTRNSAKEAAERLGATVQSAVSKNTNILIVGEKAGSKLKKAQDLGVEIMEADEFIKLANG.

Residues 34–38 (DYEYD), 83–84 (SL), and E114 contribute to the NAD(+) site. The active-site N6-AMP-lysine intermediate is K116. Residues R137, E171, K286, and K310 each coordinate NAD(+). Positions 404, 407, 422, and 427 each coordinate Zn(2+). The 79-residue stretch at 585–663 (TVESPLTGKN…ADEFIKLANG (79 aa)) folds into the BRCT domain.

The protein belongs to the NAD-dependent DNA ligase family. LigA subfamily. Mg(2+) is required as a cofactor. It depends on Mn(2+) as a cofactor.

It catalyses the reaction NAD(+) + (deoxyribonucleotide)n-3'-hydroxyl + 5'-phospho-(deoxyribonucleotide)m = (deoxyribonucleotide)n+m + AMP + beta-nicotinamide D-nucleotide.. In terms of biological role, DNA ligase that catalyzes the formation of phosphodiester linkages between 5'-phosphoryl and 3'-hydroxyl groups in double-stranded DNA using NAD as a coenzyme and as the energy source for the reaction. It is essential for DNA replication and repair of damaged DNA. In Brachyspira hyodysenteriae (strain ATCC 49526 / WA1), this protein is DNA ligase.